The chain runs to 212 residues: N-(5'-phosphoribosyl)anthranilate isomerase (212 aa).

Belongs to the TrpF family.

It catalyses the reaction N-(5-phospho-beta-D-ribosyl)anthranilate = 1-(2-carboxyphenylamino)-1-deoxy-D-ribulose 5-phosphate. Its pathway is amino-acid biosynthesis; L-tryptophan biosynthesis; L-tryptophan from chorismate: step 3/5. The sequence is that of N-(5'-phosphoribosyl)anthranilate isomerase from Cereibacter sphaeroides (strain ATCC 17029 / ATH 2.4.9) (Rhodobacter sphaeroides).